A 735-amino-acid chain; its full sequence is Photosystem I P700 chlorophyll a apoprotein A2 (735 aa).

Helical transmembrane passes span 46–69, 135–158, 176–200, 274–292, 329–352, 368–394, 416–438, and 521–539; these read IFAS…FYVS, LSTA…IHGY, LNHH…HVAI, IAHH…GHMY, LNLQ…QHMY, AALY…IFLV, VIIS…LYVH, and FLVH…LILV. [4Fe-4S] cluster-binding residues include cysteine 563 and cysteine 572. Helical transmembrane passes span 579 to 600 and 647 to 669; these read AFYL…YWHW and LSVW…MFLI. Histidine 658, methionine 666, and tyrosine 674 together coordinate chlorophyll a. Residue tryptophan 675 coordinates phylloquinone. The helical transmembrane segment at 708 to 728 threads the bilayer; sequence FVGLIHFTVGYILTYAAFLIA.

This sequence belongs to the PsaA/PsaB family. As to quaternary structure, the PsaA/B heterodimer binds the P700 chlorophyll special pair and subsequent electron acceptors. PSI consists of a core antenna complex that captures photons, and an electron transfer chain that converts photonic excitation into a charge separation. The eukaryotic PSI reaction center is composed of at least 11 subunits. P700 is a chlorophyll a/chlorophyll a' dimer, A0 is one or more chlorophyll a, A1 is one or both phylloquinones and FX is a shared 4Fe-4S iron-sulfur center. serves as cofactor.

It localises to the plastid. It is found in the chloroplast thylakoid membrane. The enzyme catalyses reduced [plastocyanin] + hnu + oxidized [2Fe-2S]-[ferredoxin] = oxidized [plastocyanin] + reduced [2Fe-2S]-[ferredoxin]. Functionally, psaA and PsaB bind P700, the primary electron donor of photosystem I (PSI), as well as the electron acceptors A0, A1 and FX. PSI is a plastocyanin/cytochrome c6-ferredoxin oxidoreductase, converting photonic excitation into a charge separation, which transfers an electron from the donor P700 chlorophyll pair to the spectroscopically characterized acceptors A0, A1, FX, FA and FB in turn. Oxidized P700 is reduced on the lumenal side of the thylakoid membrane by plastocyanin or cytochrome c6. In Bigelowiella natans (Pedinomonas minutissima), this protein is Photosystem I P700 chlorophyll a apoprotein A2.